The following is a 492-amino-acid chain: Histone-lysine N-methyltransferase PRDM7 (492 aa).

The tract at residues 1 to 22 (MSPERSQEESPEGDTERTERKP) is disordered. Residues 23–86 (MVKDAFKDIS…RRQAIKLQVD (64 aa)) form the KRAB-related domain. The tract at residues 111–179 (EQSKHQKGMP…ELRRKETEGK (69 aa)) is disordered. A compositionally biased stretch (polar residues) spans 135–150 (GTPNLLNTSDSEQAQK). Over residues 167-179 (LKLELRRKETEGK) the composition is skewed to basic and acidic residues. In terms of domain architecture, SET spans 244–358 (PGLRIGPSGI…PGCELLVWSG (115 aa)).

Its subcellular location is the nucleus. It is found in the chromosome. It carries out the reaction N(6),N(6)-dimethyl-L-lysyl(4)-[histone H3] + S-adenosyl-L-methionine = N(6),N(6),N(6)-trimethyl-L-lysyl(4)-[histone H3] + S-adenosyl-L-homocysteine + H(+). Functionally, histone methyltransferase that selectively methylates 'Lys-4' of dimethylated histone H3 (H3K4me2) to produce trimethylated 'Lys-4' histone H3 (H3K4me3). May play a role in epigenetic regulation of gene expression by defining an active chromatin state. The sequence is that of Histone-lysine N-methyltransferase PRDM7 from Homo sapiens (Human).